A 293-amino-acid chain; its full sequence is Acetylglutamate kinase (293 aa).

Substrate-binding positions include 68–69 (GG), R90, and N189.

It belongs to the acetylglutamate kinase family. ArgB subfamily.

The protein localises to the cytoplasm. It catalyses the reaction N-acetyl-L-glutamate + ATP = N-acetyl-L-glutamyl 5-phosphate + ADP. The protein operates within amino-acid biosynthesis; L-arginine biosynthesis; N(2)-acetyl-L-ornithine from L-glutamate: step 2/4. Functionally, catalyzes the ATP-dependent phosphorylation of N-acetyl-L-glutamate. This chain is Acetylglutamate kinase, found in Mycolicibacterium smegmatis (strain ATCC 700084 / mc(2)155) (Mycobacterium smegmatis).